The sequence spans 454 residues: Methylenetetrahydrofolate--tRNA-(uracil-5-)-methyltransferase TrmFO (454 aa).

9–14 (GAGLAG) lines the FAD pocket. The disordered stretch occupies residues 432 to 454 (LERVSPPSRETGEPTGAEQVDLA).

Belongs to the MnmG family. TrmFO subfamily. Requires FAD as cofactor.

Its subcellular location is the cytoplasm. The catalysed reaction is uridine(54) in tRNA + (6R)-5,10-methylene-5,6,7,8-tetrahydrofolate + NADH + H(+) = 5-methyluridine(54) in tRNA + (6S)-5,6,7,8-tetrahydrofolate + NAD(+). The enzyme catalyses uridine(54) in tRNA + (6R)-5,10-methylene-5,6,7,8-tetrahydrofolate + NADPH + H(+) = 5-methyluridine(54) in tRNA + (6S)-5,6,7,8-tetrahydrofolate + NADP(+). In terms of biological role, catalyzes the folate-dependent formation of 5-methyl-uridine at position 54 (M-5-U54) in all tRNAs. The polypeptide is Methylenetetrahydrofolate--tRNA-(uracil-5-)-methyltransferase TrmFO (Pelobacter propionicus (strain DSM 2379 / NBRC 103807 / OttBd1)).